A 201-amino-acid chain; its full sequence is Ubiquitin-conjugating enzyme E2 E2 (201 aa).

Basic and acidic residues predominate over residues 1-10 (MSTEAQRVDD). Positions 1–55 (MSTEAQRVDDSPSTSGGSSDGDQRESVQQEPEREQVQPKKKEGKISSKTAAKLST) are disordered. N-acetylserine is present on S2. A phosphoserine mark is found at S11, S15, S18, and S19. Over residues 21-45 (GDQRESVQQEPEREQVQPKKKEGKI) the composition is skewed to basic and acidic residues. Positions 46–55 (SSKTAAKLST) are enriched in low complexity. The UBC core domain maps to 55–201 (TSAKRIQKEL…ARQWTKRYAT (147 aa)). Catalysis depends on C139, which acts as the Glycyl thioester intermediate.

The protein belongs to the ubiquitin-conjugating enzyme family. Autoubiquitinated in vitro.

The catalysed reaction is S-ubiquitinyl-[E1 ubiquitin-activating enzyme]-L-cysteine + [E2 ubiquitin-conjugating enzyme]-L-cysteine = [E1 ubiquitin-activating enzyme]-L-cysteine + S-ubiquitinyl-[E2 ubiquitin-conjugating enzyme]-L-cysteine.. It participates in protein modification; protein ubiquitination. Functionally, accepts ubiquitin from the E1 complex and catalyzes its covalent attachment to other proteins. In vitro catalyzes 'Lys-11'- and 'Lys-48'-, as well as 'Lys-63'-linked polyubiquitination. Catalyzes the ISGylation of influenza A virus NS1 protein. This Homo sapiens (Human) protein is Ubiquitin-conjugating enzyme E2 E2.